The sequence spans 548 residues: MASAAVGNYEEEIVRPVADFSPSLWGDQFLSFSIENQVAEKYAQEIEALKEQTRSMLLENGRKLADTLYLIDIIERLGISYHFEKEIDDILDQIYNQNSNCNDLCTSALQFRLLRQHGFNISPEIFSKFQDENGKFKESLASDFLGLLNLYEASHVRTHADDILEEALAFSTIHLESAAPHLKSPLREQVTHALEQCLHKGVPRVETRFFISSIYEKEQSKNDVLLRFAKLDFNLLQILHKQELAEVSRWWKDLDFVTTLPYARDRVVECYFWALGVYFEPQYSQARVILVKTISMISIVDDTFDAYGTIKELETYTDAIQRWDINEIDRLPDYMKISYKAILDLYKDYEKELSSAGRSHIVCHAIERMKEVVKNYNVESTWFIEGYMPPVSEYLSNALATTTYYYLATTSYLGMKSATEQDFEWLSKNPKILEASVIICRVIDDTATYEVEKSRGQIATGIECCMRDYGVSTKEAMAKFQGMAEAAWKDLNEGFLRPTPVSTEILFRILNLARIVEVTYIHNLDGYTHPEKVLKPHINALLVDSIEI.

Mg(2+) is bound by residues Asp301, Asp305, Asp444, Thr448, and Glu452. Positions 301-305 (DDTFD) match the DDXXD motif motif.

The protein belongs to the terpene synthase family. In terms of assembly, monomer. The cofactor is Mg(2+). Expressed in roots, but not in shoots.

Its subcellular location is the cytoplasm. It catalyses the reaction (2E,6E)-farnesyl diphosphate = (+)-5-epi-aristolochene + diphosphate. The protein operates within secondary metabolite biosynthesis; terpenoid biosynthesis. Its function is as follows. Catalyzes the cyclization of trans,trans-farnesyl diphosphate (FPP) to the bicyclic intermediate 5-epi-aristolochene, initial step in the conversion of FPP to the sesquiterpenoid antifungal phytoalexin capsidiol. Produces germacrene A as an enzyme-bound intermediate that is not released by the enzyme, but is further cyclized to produce the bicyclic 5-epi-aristolochene. This is 5-epi-aristolochene synthase 3 from Nicotiana attenuata (Coyote tobacco).